The chain runs to 68 residues: Antimicrobial peptide Eval655 (68 aa).

An N-terminal signal peptide occupies residues 1-23 (MKTQFVVLLVALVLLQMFAQSEA). Residue leucine 36 is modified to Leucine amide. Positions 37–68 (GKRGLKNLDDFDDIFDDDLSSADLEFLKQLMR) are excised as a propeptide.

Belongs to the non-disulfide-bridged peptide (NDBP) superfamily. Short antimicrobial peptide (group 4) family. As to expression, expressed by the venom gland.

It is found in the secreted. In terms of biological role, probable antimicrobial peptide. Shows low inhibitory activity against herpes simplex virus type 1 (HSV-1). The polypeptide is Antimicrobial peptide Eval655 (Euscorpiops validus (Scorpion)).